A 264-amino-acid polypeptide reads, in one-letter code: Thymidylate synthase (264 aa).

R21 is a dUMP binding site. H51 is a binding site for (6R)-5,10-methylene-5,6,7,8-tetrahydrofolate. 126–127 is a dUMP binding site; it reads RR. Catalysis depends on C146, which acts as the Nucleophile. Residues 166–169, N177, and 207–209 contribute to the dUMP site; these read RSAD and HIY. A (6R)-5,10-methylene-5,6,7,8-tetrahydrofolate-binding site is contributed by D169. A263 provides a ligand contact to (6R)-5,10-methylene-5,6,7,8-tetrahydrofolate.

It belongs to the thymidylate synthase family. Bacterial-type ThyA subfamily. As to quaternary structure, homodimer.

The protein localises to the cytoplasm. It carries out the reaction dUMP + (6R)-5,10-methylene-5,6,7,8-tetrahydrofolate = 7,8-dihydrofolate + dTMP. It functions in the pathway pyrimidine metabolism; dTTP biosynthesis. In terms of biological role, catalyzes the reductive methylation of 2'-deoxyuridine-5'-monophosphate (dUMP) to 2'-deoxythymidine-5'-monophosphate (dTMP) while utilizing 5,10-methylenetetrahydrofolate (mTHF) as the methyl donor and reductant in the reaction, yielding dihydrofolate (DHF) as a by-product. This enzymatic reaction provides an intracellular de novo source of dTMP, an essential precursor for DNA biosynthesis. This chain is Thymidylate synthase, found in Porphyromonas gingivalis (strain ATCC BAA-308 / W83).